Reading from the N-terminus, the 260-residue chain is Taurine import ATP-binding protein TauB (260 aa).

In terms of domain architecture, ABC transporter spans 6–235 (AHQVSVVYAS…RYAAGESMRS (230 aa)). 40–47 (GASGCGKS) serves as a coordination point for ATP.

This sequence belongs to the ABC transporter superfamily. Taurine importer (TC 3.A.1.17.1) family. In terms of assembly, the complex is composed of two ATP-binding proteins (TauB), two transmembrane proteins (TauC) and a solute-binding protein (TauA).

It is found in the cell inner membrane. The enzyme catalyses taurine(out) + ATP + H2O = taurine(in) + ADP + phosphate + H(+). Part of the ABC transporter complex TauABC involved in taurine import. Responsible for energy coupling to the transport system. This Burkholderia thailandensis (strain ATCC 700388 / DSM 13276 / CCUG 48851 / CIP 106301 / E264) protein is Taurine import ATP-binding protein TauB.